Reading from the N-terminus, the 2798-residue chain is Nipped-B-like protein (2798 aa).

2 stretches are compositionally biased toward polar residues: residues 128–173 (LSQN…QNSP) and 191–208 (HPSS…SVSS). The interval 128-338 (LSQNSMHSSP…IKLGKDEKDQ (211 aa)) is disordered. A phosphoserine mark is found at S150 and S162. Positions 234–249 (HHADNPRHGSSDDYLH) are enriched in basic and acidic residues. Phosphoserine occurs at positions 243, 256, 274, 280, 284, 301, 306, 318, and 350. The span at 482 to 500 (RESAIERERFSKEVQDKDK) shows a compositional bias: basic and acidic residues. A disordered region spans residues 482–940 (RESAIERERF…NKAEFPSYLL (459 aa)). Residues 523–534 (PASQETGSTGNG) are compositionally biased toward polar residues. Composition is skewed to basic and acidic residues over residues 562 to 572 (DSIKKPEETKQ), 593 to 625 (PENH…ESKP), 634 to 663 (KSNE…ESKQ), 672 to 685 (KQNE…KPND), and 694 to 899 (ENTK…DTNK). A phosphothreonine mark is found at T713 and T746. Residue S906 is modified to Phosphoserine. Over residues 908-933 (NSKDDKRTEGNRSKVDSNKAHTDNKA) the composition is skewed to basic and acidic residues. The PxVxL motif signature appears at 990-1003 (NKGAKPVVVLQKLS). 2 disordered regions span residues 1011-1041 (IKDR…DQSV) and 1054-1186 (ESTM…TPEE). Position 1076 is an N6-acetyllysine (K1076). Residues S1083, S1084, and S1090 each carry the phosphoserine modification. Positions 1083–1094 (SSDEDNDSDEAF) are enriched in acidic residues. Residues 1103 to 1133 (KDDDKAWEYEERDRRSSGDHRRSGHSHDGRR) show a composition bias toward basic and acidic residues. 3 positions are modified to phosphoserine: S1144, S1146, and S1148. At Y1153 the chain carries Phosphotyrosine. S1154 carries the phosphoserine modification. Residues 1165–1176 (KMKKKEKQKKRK) are compositionally biased toward basic residues. A Phosphothreonine modification is found at T1183. At S1191 the chain carries Phosphoserine. Basic and acidic residues predominate over residues 1685–1705 (AMKSQKDEESSDATHHAKELE). The tract at residues 1685–1706 (AMKSQKDEESSDATHHAKELET) is disordered. HEAT repeat units lie at residues 1761 to 1799 (AQSF…VDPS), 1837 to 1875 (PQLA…EQPT), 1939 to 1978 (YDWF…HILK), 2221 to 2261 (VNLK…LKEM), and 2307 to 2345 (LIHP…KYAG). Basic and acidic residues predominate over residues 2467-2483 (VKDKRKERKTSPAKENE). Disordered regions lie at residues 2467–2514 (VKDK…DDIN) and 2645–2690 (TSLL…DSTE). A phosphoserine mark is found at S2487, S2503, S2505, S2507, S2509, S2646, and S2652. The span at 2504 to 2513 (ESDSDSEDDI) shows a compositional bias: acidic residues. The residue at position 2661 (T2661) is a Phosphothreonine. S2666 bears the Phosphoserine mark.

The protein belongs to the SCC2/Nipped-B family. In terms of assembly, heterodimerizes with MAU2/SCC4 to form the cohesin loading complex. The NIPBL-MAU2 heterodimer interacts with the cohesin complex composed of SMC1A/B and SMC3 heterodimer, RAD21 and STAG1/SA1. NIPBL directly contacts all members of the complex, RAD21, SMC1A/B, SMC3 and STAG1. Interacts directly (via PxVxL motif) with CBX3 and CBX5. Interacts with ZNF609 (via N-terminus). Interacts with the multiprotein complex Integrator. Interacts with BRD4. In terms of tissue distribution, spermatocytes and oocytes (at protein level).

It localises to the nucleus. It is found in the chromosome. Plays an important role in the loading of the cohesin complex on to DNA. Forms a heterodimeric complex (also known as cohesin loading complex) with MAU2/SCC4 which mediates the loading of the cohesin complex onto chromatin. Plays a role in cohesin loading at sites of DNA damage. Its recruitment to double-strand breaks (DSBs) sites occurs in a CBX3-, RNF8- and RNF168-dependent manner whereas its recruitment to UV irradiation-induced DNA damage sites occurs in a ATM-, ATR-, RNF8- and RNF168-dependent manner. Along with ZNF609, promotes cortical neuron migration during brain development by regulating the transcription of crucial genes in this process. Preferentially binds promoters containing paused RNA polymerase II. Up-regulates the expression of SEMA3A, NRP1, PLXND1 and GABBR2 genes, among others. This is Nipped-B-like protein (Nipbl) from Mus musculus (Mouse).